We begin with the raw amino-acid sequence, 214 residues long: Glycine-rich protein 2 (214 aa).

A CSD domain is found at 8–75 (RAKGTVKWFS…RTKAVDVTGP (68 aa)). The tract at residues 54–91 (TVEFEVESGGDGRTKAVDVTGPDGAAVQGGRGGGGGGG) is disordered. Gly residues predominate over residues 80–91 (VQGGRGGGGGGG). CCHC-type zinc fingers lie at residues 157-174 (SGCF…DCSQ) and 194-211 (GGCY…ECTS).

This is Glycine-rich protein 2 (GRP-2) from Nicotiana sylvestris (Wood tobacco).